Consider the following 919-residue polypeptide: Probable disease resistance protein At4g27220 (919 aa).

Coiled-coil stretches lie at residues 1–30 and 74–95; these read MFRS…LKRS and VEIL…KKIS. An NB-ARC domain is found at 121 to 399; sequence MLDKLKDCLK…AEGLLDGQHH (279 aa). An ATP-binding site is contributed by 141 to 148; it reads GMGGVGKT. LRR repeat units lie at residues 447–468, 469–492, 494–516, 519–540, 542–564, 565–587, 588–610, and 611–635; these read GEGF…QDKF, VSSV…VIEG, ETLV…FLQA, NLRI…FSNL, SLRS…ESLV, KLQF…EALS, SLRY…TILQ, and LSSL…EREG.

The protein belongs to the disease resistance NB-LRR family.

In terms of biological role, probable disease resistance protein. This Arabidopsis thaliana (Mouse-ear cress) protein is Probable disease resistance protein At4g27220.